The following is a 166-amino-acid chain: UPF0336 protein ML2425 (166 aa).

Positions 10-131 constitute a MaoC-like domain; the sequence is LIGKHYRQLD…VIAEVRSEVT (122 aa).

The protein belongs to the UPF0336 family.

The sequence is that of UPF0336 protein ML2425 from Mycobacterium leprae (strain TN).